Consider the following 363-residue polypeptide: 2,5-diketocamphane 1,2-monooxygenase 2 (363 aa).

Residues Met-74 and 186 to 194 (TGLTKNSSS) contribute to the FMN site.

Belongs to the bacterial luciferase oxidoreductase family. In terms of assembly, homodimer. Likely forms a loose transient complex with a P.putida flavin reductase that provides the required FMNH(2) to the enzyme.

It catalyses the reaction (1R,4R)-bornane-2,5-dione + FMNH2 + O2 = (1R,4R)-5-oxo-1,2-campholide + FMN + H2O + H(+). It participates in terpene metabolism; (R)-camphor degradation. Its function is as follows. Involved in the degradation and assimilation of (+)-camphor, which allows P.putida strain NCIMB 10007 to grow on this enantiomer of camphor as the sole carbon source. Catalyzes the FMNH(2)-dependent lactonization of 2,5-diketocamphane via a Baeyer-Villiger oxidation to produce the unstable lactone 5-oxo-1,2-campholide with (R,R) configuration, that presumably undergoes spontaneous hydrolysis to form 2-oxo-Delta(3)-4,5,5-trimethylcyclopentenylacetate. Is also able to convert (+)-camphor and norcamphor to the corresponding lactone in vitro. Shows no conversion of (-)-camphor, (+)-fenchone, (-)-fenchone, and (+)-nopinone. Acts on other bicyclic ketones and, to a lesser extent, on some 2- and 4-substituted monocyclic ketones. The protein is 2,5-diketocamphane 1,2-monooxygenase 2 of Pseudomonas putida (Arthrobacter siderocapsulatus).